A 216-amino-acid polypeptide reads, in one-letter code: Somatotropin (216 aa).

The N-terminal stretch at 1-25 is a signal peptide; it reads MAPGSWFSPLLIAVVTLGLPQEAAA. A Zn(2+)-binding site is contributed by H45. C78 and C189 are oxidised to a cystine. E198 provides a ligand contact to Zn(2+). C206 and C214 are oxidised to a cystine.

This sequence belongs to the somatotropin/prolactin family.

Its subcellular location is the secreted. Its function is as follows. Growth hormone plays an important role in growth control. The chain is Somatotropin (GH) from Gallus gallus (Chicken).